A 338-amino-acid polypeptide reads, in one-letter code: DNA-directed RNA polymerase subunit alpha (338 aa).

Residues 1–234 (MIHKNWAELI…DQLSVFVNFD (234 aa)) form an alpha N-terminal domain (alpha-NTD) region. Positions 250–338 (FDPRLLKKVD…DLAKRFDDQF (89 aa)) are alpha C-terminal domain (alpha-CTD).

Belongs to the RNA polymerase alpha chain family. Homodimer. The RNAP catalytic core consists of 2 alpha, 1 beta, 1 beta' and 1 omega subunit. When a sigma factor is associated with the core the holoenzyme is formed, which can initiate transcription.

It carries out the reaction RNA(n) + a ribonucleoside 5'-triphosphate = RNA(n+1) + diphosphate. DNA-dependent RNA polymerase catalyzes the transcription of DNA into RNA using the four ribonucleoside triphosphates as substrates. The chain is DNA-directed RNA polymerase subunit alpha from Paracoccus denitrificans (strain Pd 1222).